Reading from the N-terminus, the 172-residue chain is Small ribosomal subunit protein uS5 (172 aa).

In terms of domain architecture, S5 DRBM spans Leu-17–Ile-80.

This sequence belongs to the universal ribosomal protein uS5 family. In terms of assembly, part of the 30S ribosomal subunit. Contacts proteins S4 and S8.

With S4 and S12 plays an important role in translational accuracy. Functionally, located at the back of the 30S subunit body where it stabilizes the conformation of the head with respect to the body. In Variovorax paradoxus (strain S110), this protein is Small ribosomal subunit protein uS5.